Reading from the N-terminus, the 42-residue chain is uncharacterized protein (42 aa).

The protein resides in the plastid. Its subcellular location is the chloroplast. This is an uncharacterized protein from Diacronema lutheri (Unicellular marine alga).